A 113-amino-acid chain; its full sequence is Large ribosomal subunit protein uL24 (113 aa).

This sequence belongs to the universal ribosomal protein uL24 family. Part of the 50S ribosomal subunit.

One of two assembly initiator proteins, it binds directly to the 5'-end of the 23S rRNA, where it nucleates assembly of the 50S subunit. Its function is as follows. One of the proteins that surrounds the polypeptide exit tunnel on the outside of the subunit. The chain is Large ribosomal subunit protein uL24 from Chlamydia felis (strain Fe/C-56) (Chlamydophila felis).